The chain runs to 447 residues: Na(+)/H(+) antiporter NhaA 2 (447 aa).

10 helical membrane-spanning segments follow: residues V34–W54, L77–L97, A115–V135, G146–G166, F176–Y196, I200–Q220, V290–G310, P321–T341, W359–I379, and F393–L413.

The protein belongs to the NhaA Na(+)/H(+) (TC 2.A.33) antiporter family.

The protein resides in the cell membrane. The catalysed reaction is Na(+)(in) + 2 H(+)(out) = Na(+)(out) + 2 H(+)(in). Functionally, na(+)/H(+) antiporter that extrudes sodium in exchange for external protons. The polypeptide is Na(+)/H(+) antiporter NhaA 2 (Mycolicibacterium gilvum (strain PYR-GCK) (Mycobacterium gilvum (strain PYR-GCK))).